The following is a 702-amino-acid chain: Sodium/hydrogen exchanger 6 (702 aa).

12 helical membrane-spanning segments follow: residues 72 to 92, 104 to 124, 177 to 197, 212 to 232, 253 to 273, 279 to 299, 325 to 345, 373 to 393, 415 to 435, 437 to 457, 480 to 500, and 516 to 536; these read SANL…IWLF, GLAM…IHVP, VTFD…FYAG, ILAY…SIMY, CLLF…AIFH, VELY…AIVL, IGIF…TGVV, TFLL…FCGI, FELL…LTLF, FQNH…IFLG, NFQH…ALAI, and LLIV…MLSC.

The protein belongs to the monovalent cation:proton antiporter 1 (CPA1) transporter (TC 2.A.36) family. In terms of assembly, homodimer. Interacts with RACK1; regulates the distribution of SLC9A6 between endosomes and the plasma membrane. In terms of processing, ubiquitinated (in vitro). Glycosylated.

It is found in the endosome membrane. Its subcellular location is the recycling endosome membrane. It localises to the early endosome membrane. The protein resides in the late endosome membrane. The protein localises to the cell membrane. The enzyme catalyses Na(+)(in) + H(+)(out) = Na(+)(out) + H(+)(in). The catalysed reaction is K(+)(in) + H(+)(out) = K(+)(out) + H(+)(in). Its function is as follows. Endosomal Na(+), K(+)/H(+) antiporter. Mediates the electroneutral exchange of endosomal luminal H(+) for a cytosolic Na(+) or K(+). By facilitating proton efflux, SLC9A6 counteracts the acidity generated by vacuolar (V)-ATPase, thereby limiting luminal acidification. Responsible for alkalizing and maintaining the endosomal pH, and consequently in, e.g., endosome maturation and trafficking of recycling endosomal cargo. Plays a critical role during neurodevelopment by regulating synaptic development and plasticity. Implicated in the maintenance of cell polarity in a manner that is dependent on its ability to modulate intravesicular pH. Regulates intracelular pH in some specialized cells, osteoclasts and stereocilia where this transporter localizes to the plasma membrane. The chain is Sodium/hydrogen exchanger 6 (Slc9a6) from Mus musculus (Mouse).